We begin with the raw amino-acid sequence, 446 residues long: Argininosuccinate synthase (446 aa).

ATP-binding positions include 17–25 (AFSGGLDTS) and A43. An L-citrulline-binding site is contributed by Y99. Residues G129 and T131 each coordinate ATP. The L-aspartate site is built by T131, N135, and D136. Residue N135 participates in L-citrulline binding. D136 lines the ATP pocket. 2 residues coordinate L-citrulline: R139 and S192. D194 serves as a coordination point for ATP. T201, E203, and E280 together coordinate L-citrulline.

It belongs to the argininosuccinate synthase family. Type 2 subfamily. As to quaternary structure, homotetramer.

It is found in the cytoplasm. The catalysed reaction is L-citrulline + L-aspartate + ATP = 2-(N(omega)-L-arginino)succinate + AMP + diphosphate + H(+). It participates in amino-acid biosynthesis; L-arginine biosynthesis; L-arginine from L-ornithine and carbamoyl phosphate: step 2/3. This chain is Argininosuccinate synthase, found in Variovorax paradoxus (strain S110).